Here is a 124-residue protein sequence, read N- to C-terminus: MLGIDIIKNIRIAKALERFGYHFLNRVYTEYEINLCKMNVECLSGRFAAKEASIKAFSFLSIRRFSFRDFEVVKSKNGIPELRIKDAYINDFLKAQKLKPFISISHEKEFSVAVCYITKEERIC.

D5 and E51 together coordinate Mg(2+).

This sequence belongs to the P-Pant transferase superfamily. AcpS family. Mg(2+) serves as cofactor.

It is found in the cytoplasm. The enzyme catalyses apo-[ACP] + CoA = holo-[ACP] + adenosine 3',5'-bisphosphate + H(+). In terms of biological role, transfers the 4'-phosphopantetheine moiety from coenzyme A to a Ser of acyl-carrier-protein. The protein is Holo-[acyl-carrier-protein] synthase of Hydrogenobaculum sp. (strain Y04AAS1).